A 443-amino-acid polypeptide reads, in one-letter code: ATP synthase subunit b-delta (443 aa).

Residues 1–168 form an ATP synthase subunit b region; sequence MSTFIGQLIG…PSDAALDDAV (168 aa). The chain crosses the membrane as a helical span at residues 4–24; that stretch reads FIGQLIGFAVIVFLLVRFVVP. Residues 169-443 are ATP synthase subunit delta; sequence GSRMRSTSRE…LASAETQLPD (275 aa).

This sequence in the N-terminal section; belongs to the ATPase B chain family. In the C-terminal section; belongs to the ATPase delta chain family. F-type ATPases have 2 components, F(1) - the catalytic core - and F(0) - the membrane proton channel. F(1) has five subunits: alpha(3), beta(3), gamma(1), delta(1), epsilon(1). F(0) has three main subunits: a(1), b(2) and c(10-14). The alpha and beta chains form an alternating ring which encloses part of the gamma chain. F(1) is attached to F(0) by a central stalk formed by the gamma and epsilon chains, while a peripheral stalk is formed by the delta and b chains.

Its subcellular location is the cell membrane. Its function is as follows. F(1)F(0) ATP synthase produces ATP from ADP in the presence of a proton or sodium gradient. F-type ATPases consist of two structural domains, F(1) containing the extramembraneous catalytic core and F(0) containing the membrane proton channel, linked together by a central stalk and a peripheral stalk. During catalysis, ATP synthesis in the catalytic domain of F(1) is coupled via a rotary mechanism of the central stalk subunits to proton translocation. In terms of biological role, this fusion protein includes a component of the F(0) channel (subunit b) and of the F(1) subunit (subunit delta). Two copies of subunit b and one of delta together form the peripheral 'stator' stalk which links F(1) to F(0). The protein is ATP synthase subunit b-delta (atpFH) of Mycobacterium sp. (strain JLS).